The sequence spans 736 residues: Polyribonucleotide nucleotidyltransferase (736 aa).

Mg(2+) is bound by residues Asp488 and Asp494. One can recognise a KH domain in the interval 555–614 (PMVQTLEIQKEKIRDVIGLGGKVIKELCKTFDVEIDISENGEVKVWGNVGENVKKAVQSI). The 69-residue stretch at 624 to 692 (GDIFDGEVVK…HKNRVKLTLR (69 aa)) folds into the S1 motif domain.

The protein belongs to the polyribonucleotide nucleotidyltransferase family. It depends on Mg(2+) as a cofactor.

It localises to the cytoplasm. It carries out the reaction RNA(n+1) + phosphate = RNA(n) + a ribonucleoside 5'-diphosphate. Its function is as follows. Involved in mRNA degradation. Catalyzes the phosphorolysis of single-stranded polyribonucleotides processively in the 3'- to 5'-direction. The polypeptide is Polyribonucleotide nucleotidyltransferase (Orientia tsutsugamushi (strain Ikeda) (Rickettsia tsutsugamushi)).